A 407-amino-acid polypeptide reads, in one-letter code: S-adenosylmethionine synthase (407 aa).

Histidine 15 provides a ligand contact to ATP. Aspartate 17 lines the Mg(2+) pocket. Glutamate 43 is a K(+) binding site. 2 residues coordinate L-methionine: glutamate 56 and glutamine 99. Residues glutamine 99 to threonine 109 form a flexible loop region. The tract at residues glutamate 112–glycine 131 is disordered. Residues aspartate 179–lysine 181, arginine 252–phenylalanine 253, aspartate 261, arginine 267–lysine 268, alanine 284, and lysine 288 each bind ATP. Aspartate 261 serves as a coordination point for L-methionine. Lysine 292 is an L-methionine binding site.

This sequence belongs to the AdoMet synthase family. As to quaternary structure, homotetramer; dimer of dimers. The cofactor is Mg(2+). K(+) is required as a cofactor.

The protein localises to the cytoplasm. The catalysed reaction is L-methionine + ATP + H2O = S-adenosyl-L-methionine + phosphate + diphosphate. It functions in the pathway amino-acid biosynthesis; S-adenosyl-L-methionine biosynthesis; S-adenosyl-L-methionine from L-methionine: step 1/1. Functionally, catalyzes the formation of S-adenosylmethionine (AdoMet) from methionine and ATP. The overall synthetic reaction is composed of two sequential steps, AdoMet formation and the subsequent tripolyphosphate hydrolysis which occurs prior to release of AdoMet from the enzyme. The sequence is that of S-adenosylmethionine synthase from Streptomyces fradiae (Streptomyces roseoflavus).